The primary structure comprises 114 residues: T-cell leukemia/lymphoma protein 1A (114 aa).

This sequence belongs to the TCL1 family. As to quaternary structure, homodimer. Interacts with AKT1, AKT2 and AKT3 (via PH domain). Interacts with PNPT1; the interaction has no effect on PNPT1 exonuclease activity. As to expression, restricted in the T-cell lineage to immature thymocytes and activated peripheral lymphocytes. Preferentially expressed early in T- and B-lymphocyte differentiation.

The protein resides in the cytoplasm. The protein localises to the nucleus. Its subcellular location is the microsome. It localises to the endoplasmic reticulum. In terms of biological role, enhances the phosphorylation and activation of AKT1, AKT2 and AKT3. Promotes nuclear translocation of AKT1. Enhances cell proliferation, stabilizes mitochondrial membrane potential and promotes cell survival. This chain is T-cell leukemia/lymphoma protein 1A (TCL1A), found in Homo sapiens (Human).